A 292-amino-acid polypeptide reads, in one-letter code: UPF0696 protein C11orf68 homolog (292 aa).

A compositionally biased stretch (low complexity) spans 1 to 10 (MAAAAAAVAG). A disordered region spans residues 1-60 (MAAAAAAVAGAGRGGGGGADPGQERSRARSWVGAERSEGRRMEPNEELEEEDSPGGREDG). Residues 11–20 (AGRGGGGGAD) are compositionally biased toward gly residues. Positions 35 to 44 (ERSEGRRMEP) are enriched in basic and acidic residues.

This sequence belongs to the UPF0696 family.

The sequence is that of UPF0696 protein C11orf68 homolog (Bles03) from Rattus norvegicus (Rat).